The sequence spans 296 residues: Cytidine deaminase (296 aa).

CMP/dCMP-type deaminase domains lie at 47-167 (ELNE…FGPS) and 186-296 (DSND…VEPE). 88-90 (NIE) contributes to the substrate binding site. A Zn(2+)-binding site is contributed by histidine 101. Glutamate 103 acts as the Proton donor in catalysis. Residues cysteine 128 and cysteine 131 each contribute to the Zn(2+) site.

The protein belongs to the cytidine and deoxycytidylate deaminase family. Homodimer. Zn(2+) serves as cofactor.

The enzyme catalyses cytidine + H2O + H(+) = uridine + NH4(+). It carries out the reaction 2'-deoxycytidine + H2O + H(+) = 2'-deoxyuridine + NH4(+). This enzyme scavenges exogenous and endogenous cytidine and 2'-deoxycytidine for UMP synthesis. The polypeptide is Cytidine deaminase (Shewanella pealeana (strain ATCC 700345 / ANG-SQ1)).